A 112-amino-acid polypeptide reads, in one-letter code: Divalent-cation tolerance protein CutA (112 aa).

Residues Cys-16, His-83, and His-84 each contribute to the Cu cation site.

It belongs to the CutA family. In terms of assembly, homotrimer. Cu cation serves as cofactor.

It localises to the cytoplasm. In terms of biological role, involved in resistance toward heavy metals. The chain is Divalent-cation tolerance protein CutA from Shigella flexneri.